A 118-amino-acid polypeptide reads, in one-letter code: MRSKFKDEHPFEKRKAEAERIRQKYADRIPVICEKVEKSDIATIDKKKYLVPADLTVGQFVYVIRKRIKLSPEKAIFIFVDEVLPPTAALMSSIYEEHKDEDGFLYITYSGENTFGEA.

Gly-116 carries Phosphatidylethanolamine amidated glycine lipidation. A propeptide spans 117-118 (EA) (removed in mature form).

The protein belongs to the ATG8 family. In terms of assembly, conjugation to phosphatidylethanolamine (PE) leads to homodimerization. Interacts with ATG1, ATG3, ATG4, ATG7 and ATG12. The C-terminal Glu-117 and Ala-118 residues of ATG8 are removed by ATG4 to expose Gly-116 at the C-terminus. This Gly-116 forms then a thioester bond with the 'Cys-550' of ATG7 (E1-like activating enzyme) before being transferred to the 'Cys-244' of ATG3 (the specific E2 conjugating enzyme), in order to be finally amidated with phosphatidylethanolamine. This lipid modification anchors ATG8 to membranes and can be reversed by ATG4, releasing soluble ATG8.

Its subcellular location is the cytoplasmic vesicle. The protein localises to the cvt vesicle membrane. It is found in the autophagosome membrane. The protein resides in the vacuole membrane. Its function is as follows. Ubiquitin-like modifier involved in cytoplasm to vacuole transport (Cvt) vesicles and autophagosome formation. With ATG4, mediates the delivery of the vesicles and autophagosomes to the vacuole via the microtubule cytoskeleton. Required for selective autophagic degradation of the nucleus (nucleophagy) as well as for mitophagy which contributes to regulate mitochondrial quantity and quality by eliminating the mitochondria to a basal level to fulfill cellular energy requirements and preventing excess ROS production. Also participates in membrane fusion events that take place in the early secretory pathway. Also involved in endoplasmic reticulum-specific autophagic process and is essential for the survival of cells subjected to severe ER stress. The ATG8-PE conjugate mediates tethering between adjacent membranes and stimulates membrane hemifusion, leading to expansion of the autophagosomal membrane during autophagy. Moreover not only conjugation, but also subsequent ATG8-PE deconjugation is an important step required to facilitate multiple events during macroautophagy, and especially for efficient autophagosome biogenesis, the assembly of ATG9-containing tubulovesicular clusters into phagophores/autophagosomes, and for the disassembly of PAS-associated ATG components. Autophagy is required for proper vegetative growth, asexual/sexual reproduction, and full virulence. Autophagy is particularly involved in the biosynthesis of deoxynivalenol (DON), an important virulence determinant. This chain is Autophagy-related protein 8, found in Gibberella zeae (strain ATCC MYA-4620 / CBS 123657 / FGSC 9075 / NRRL 31084 / PH-1) (Wheat head blight fungus).